The sequence spans 91 residues: Small ribosomal subunit protein bS20 (91 aa).

It belongs to the bacterial ribosomal protein bS20 family.

Functionally, binds directly to 16S ribosomal RNA. This is Small ribosomal subunit protein bS20 from Acidithiobacillus ferrooxidans (strain ATCC 23270 / DSM 14882 / CIP 104768 / NCIMB 8455) (Ferrobacillus ferrooxidans (strain ATCC 23270)).